The chain runs to 55 residues: ATP synthase F(0) complex subunit 8 (55 aa).

The helical transmembrane segment at 4–24 (LLPTPWFTIFIYAWMVLLAVI) threads the bilayer.

The protein belongs to the ATPase protein 8 family. Component of the ATP synthase complex composed at least of ATP5F1A/subunit alpha, ATP5F1B/subunit beta, ATP5MC1/subunit c (homooctomer), MT-ATP6/subunit a, MT-ATP8/subunit 8, ATP5ME/subunit e, ATP5MF/subunit f, ATP5MG/subunit g, ATP5MK/subunit k, ATP5MJ/subunit j, ATP5F1C/subunit gamma, ATP5F1D/subunit delta, ATP5F1E/subunit epsilon, ATP5PF/subunit F6, ATP5PB/subunit b, ATP5PD/subunit d, ATP5PO/subunit OSCP. ATP synthase complex consists of a soluble F(1) head domain (subunits alpha(3) and beta(3)) - the catalytic core - and a membrane F(0) domain - the membrane proton channel (subunits c, a, 8, e, f, g, k and j). These two domains are linked by a central stalk (subunits gamma, delta, and epsilon) rotating inside the F1 region and a stationary peripheral stalk (subunits F6, b, d, and OSCP).

The protein resides in the mitochondrion membrane. Its function is as follows. Subunit 8, of the mitochondrial membrane ATP synthase complex (F(1)F(0) ATP synthase or Complex V) that produces ATP from ADP in the presence of a proton gradient across the membrane which is generated by electron transport complexes of the respiratory chain. ATP synthase complex consist of a soluble F(1) head domain - the catalytic core - and a membrane F(1) domain - the membrane proton channel. These two domains are linked by a central stalk rotating inside the F(1) region and a stationary peripheral stalk. During catalysis, ATP synthesis in the catalytic domain of F(1) is coupled via a rotary mechanism of the central stalk subunits to proton translocation. In vivo, can only synthesize ATP although its ATP hydrolase activity can be activated artificially in vitro. Part of the complex F(0) domain. The protein is ATP synthase F(0) complex subunit 8 of Dicentrarchus labrax (European seabass).